The primary structure comprises 284 residues: RAD52 motif-containing protein 1 (284 aa).

The necessary for nuclear localization and for nucleolar accumulation in response to heat shock stretch occupies residues 1–92 (MAELVPFAVP…KQLFQKSPVK (92 aa)). In terms of domain architecture, RRM spans 15 to 98 (KTLLVWELSS…SPVKVRLGTR (84 aa)). Residues 90–133 (PVKVRLGTRHKAVQHQALALNSSRCQELANYYFGFNGWSKRIIK) form a necessary for nuclear and nucleolar localization region.

As to quaternary structure, homodimer.

The protein resides in the nucleus. The protein localises to the cytoplasm. It is found in the nucleolus. Its subcellular location is the cajal body. It localises to the PML body. Functionally, may confer resistance to the antitumor agent cisplatin. Binds to DNA and RNA. The chain is RAD52 motif-containing protein 1 (RDM1) from Macaca fascicularis (Crab-eating macaque).